A 264-amino-acid chain; its full sequence is 3-methyl-2-oxobutanoate hydroxymethyltransferase (264 aa).

Mg(2+) contacts are provided by D45 and D84. 3-methyl-2-oxobutanoate is bound by residues 45-46 (DS), D84, and K112. E114 contacts Mg(2+). Catalysis depends on E181, which acts as the Proton acceptor.

This sequence belongs to the PanB family. Homodecamer; pentamer of dimers. Requires Mg(2+) as cofactor.

Its subcellular location is the cytoplasm. The enzyme catalyses 3-methyl-2-oxobutanoate + (6R)-5,10-methylene-5,6,7,8-tetrahydrofolate + H2O = 2-dehydropantoate + (6S)-5,6,7,8-tetrahydrofolate. The protein operates within cofactor biosynthesis; (R)-pantothenate biosynthesis; (R)-pantoate from 3-methyl-2-oxobutanoate: step 1/2. Its function is as follows. Catalyzes the reversible reaction in which hydroxymethyl group from 5,10-methylenetetrahydrofolate is transferred onto alpha-ketoisovalerate to form ketopantoate. The protein is 3-methyl-2-oxobutanoate hydroxymethyltransferase of Aeromonas hydrophila subsp. hydrophila (strain ATCC 7966 / DSM 30187 / BCRC 13018 / CCUG 14551 / JCM 1027 / KCTC 2358 / NCIMB 9240 / NCTC 8049).